Here is a 376-residue protein sequence, read N- to C-terminus: 2-aminoethylphosphonate--pyruvate transaminase 2 (376 aa).

At K194 the chain carries N6-(pyridoxal phosphate)lysine.

This sequence belongs to the class-V pyridoxal-phosphate-dependent aminotransferase family. PhnW subfamily. Homodimer. It depends on pyridoxal 5'-phosphate as a cofactor.

It carries out the reaction (2-aminoethyl)phosphonate + pyruvate = phosphonoacetaldehyde + L-alanine. Functionally, involved in phosphonate degradation. The protein is 2-aminoethylphosphonate--pyruvate transaminase 2 of Burkholderia lata (strain ATCC 17760 / DSM 23089 / LMG 22485 / NCIMB 9086 / R18194 / 383).